A 316-amino-acid polypeptide reads, in one-letter code: tRNA dimethylallyltransferase (316 aa).

ATP is bound at residue 17-24 (GPTASGKT). Residue 19 to 24 (TASGKT) coordinates substrate. 3 interaction with substrate tRNA regions span residues 42–45 (DSAL), 166–170 (QRLSR), and 247–252 (RCVGYR).

It belongs to the IPP transferase family. As to quaternary structure, monomer. It depends on Mg(2+) as a cofactor.

It carries out the reaction adenosine(37) in tRNA + dimethylallyl diphosphate = N(6)-dimethylallyladenosine(37) in tRNA + diphosphate. In terms of biological role, catalyzes the transfer of a dimethylallyl group onto the adenine at position 37 in tRNAs that read codons beginning with uridine, leading to the formation of N6-(dimethylallyl)adenosine (i(6)A). The polypeptide is tRNA dimethylallyltransferase (Salmonella enteritidis PT4 (strain P125109)).